The chain runs to 140 residues: Myelodysplastic syndrome 2 translocation-associated protein (140 aa).

As to expression, highly expressed in peripheral blood leukocytes, spleen, thymus, kidney, pancreas and lung.

The polypeptide is Myelodysplastic syndrome 2 translocation-associated protein (MDS2) (Homo sapiens (Human)).